Here is a 681-residue protein sequence, read N- to C-terminus: PTS system glucose-specific EIICBA component (681 aa).

The region spanning 3-414 (KKLFGQLQRI…LKYKTPGRED (412 aa)) is the PTS EIIC type-1 domain. 10 consecutive transmembrane segments (helical) span residues 16–36 (LMLP…GTAM), 73–93 (MIFA…AAIA), 126–146 (ILGI…GALA), 170–190 (FVPI…ALIW), 199–219 (AFST…FGFI), 273–293 (FMQG…LAIY), 303–323 (VVAG…ITEP), 328–348 (FLFV…LSFL), 355–375 (LHLG…GILP), and 383–403 (VIPV…FLIV). Residues 425–506 (TELPYAVLEA…QQIMNGQVVE (82 aa)) form the PTS EIIB type-1 domain. Residue C447 is the Phosphocysteine intermediate; for EIIB activity of the active site. The region spanning 551-655 (DQVFSEKMMG…SDITPIIVTQ (105 aa)) is the PTS EIIA type-1 domain. H603 acts as the Tele-phosphohistidine intermediate; for EIIA activity in catalysis.

Its subcellular location is the cell membrane. It catalyses the reaction N(pros)-phospho-L-histidyl-[protein] + D-glucose(out) = D-glucose 6-phosphate(in) + L-histidyl-[protein]. Functionally, the phosphoenolpyruvate-dependent sugar phosphotransferase system (sugar PTS), a major carbohydrate active transport system, catalyzes the phosphorylation of incoming sugar substrates concomitantly with their translocation across the cell membrane. This system is involved in glucose transport. The protein is PTS system glucose-specific EIICBA component (ptsG) of Staphylococcus aureus (strain bovine RF122 / ET3-1).